The sequence spans 635 residues: MATAEAQIGVNRNLQKQDLSNLDVSKLTPLSPEVISRQATINIGTIGHVAHGKSTVVKAISGVQTVRFKNELERNITIKLERLSEKKIKNLLTSKQQRQQYEIKQRSMLRHLAELRRHSRFRRLCTKPASSSMPASTSSVDRRTTRRSTSQTSLSPSNSSGYGSVFGCEEHDVDKIPSLNGFAKLKRRRSSCVGAPTPNSKRSKNNMGVIAKRPPKGEYVVERIECVEMDQYQPVFFVKWLGYHDSENTWESLANVADCAEMEKFVERHQQLYETYIAKITTELEKQLEALPLMENITVAEVDAYEPLNLQIDLILLAQYRAAGSRSQREPQKIGERALKSMQIKRAQFVRRKQLADLALFEKRMNHVEKPSPPIRVENNIDLDTIDSNFMYIHDNIIGKDVPKPEAGIVGCKCTEDTEECTASTKCCARFAGELFAYERSTRRLRLRPGSAIYECNSRCSCDSSCSNRLVQHGRQVPLVLFKTANGSGWGVRAATALRKGEFVCEYIGEIITSDEANERGKAYDDNGRTYLFDLDYNTAQDSEYTIDAANYGNISHFINHSCDPNLAVFPCWIEHLNVALPHLVFFTLRPIKAGEELSFDYIRADNEDVPYENLSTAVRVECRCGRDNCRKVLF.

The interval 81-188 (ERLSEKKIKN…LNGFAKLKRR (108 aa)) is binds to Su(var)205 and Suvar(3)7. Disordered stretches follow at residues 123–161 (RLCTKPASSSMPASTSSVDRRTTRRSTSQTSLSPSNSSG) and 191–210 (SCVGAPTPNSKRSKNNMGVI). Composition is skewed to low complexity over residues 128–139 (PASSSMPASTSS) and 147–161 (RSTSQTSLSPSNSSG). The Chromo domain maps to 219-278 (YVVERIECVEMDQYQPVFFVKWLGYHDSENTWESLANVADCAEMEKFVERHQQLYETYIA). In terms of domain architecture, Pre-SET spans 410–474 (VGCKCTEDTE…SCSNRLVQHG (65 aa)). Zn(2+) is bound by residues cysteine 412, cysteine 414, cysteine 421, cysteine 427, cysteine 428, cysteine 456, cysteine 460, cysteine 462, and cysteine 466. The SET domain occupies 477–603 (VPLVLFKTAN…AGEELSFDYI (127 aa)). S-adenosyl-L-methionine contacts are provided by residues 488–490 (SGW), tyrosine 531, and 560–561 (NH). Zn(2+) is bound by residues cysteine 563, cysteine 623, cysteine 625, and cysteine 630. One can recognise a Post-SET domain in the interval 619–635 (VRVECRCGRDNCRKVLF).

This sequence belongs to the class V-like SAM-binding methyltransferase superfamily. Histone-lysine methyltransferase family. Suvar3-9 subfamily. Interacts with Su(var)205 and Su(var)3-7. Probably associates with HDAC1/Rpd3. Interacts with Rrp6; the interaction promotes association of Rrp6 with a subset of genomic loci.

The protein resides in the nucleus. Its subcellular location is the chromosome. The protein localises to the centromere. The catalysed reaction is L-lysyl(9)-[histone H3] + 3 S-adenosyl-L-methionine = N(6),N(6),N(6)-trimethyl-L-lysyl(9)-[histone H3] + 3 S-adenosyl-L-homocysteine + 3 H(+). In terms of biological role, histone methyltransferase that specifically trimethylates 'Lys-9' of histone H3 using monomethylated H3 'Lys-9' as substrate. H3 'Lys-9' trimethylation represents a specific tag for epigenetic transcriptional repression by recruiting Su(var)205/HP1 to methylated histones. Mainly functions in heterochromatin regions, thereby playing a central role in the establishment of constitutive heterochromatin at pericentric regions. Involved in heterochromatic gene silencing including the modification of position-effect-variegation. This is Histone-lysine N-methyltransferase Su(var)3-9 (Su(var)3-9) from Drosophila melanogaster (Fruit fly).